The following is a 103-amino-acid chain: Large ribosomal subunit protein bL21 (103 aa).

Belongs to the bacterial ribosomal protein bL21 family. In terms of assembly, part of the 50S ribosomal subunit. Contacts protein L20.

This protein binds to 23S rRNA in the presence of protein L20. This Shigella sonnei (strain Ss046) protein is Large ribosomal subunit protein bL21.